Here is a 204-residue protein sequence, read N- to C-terminus: Ras-related protein Rab-7L1 (204 aa).

GTP is bound by residues S33, K34, H35, Y36, K37, and T39. The Effector region signature appears at 36–44; that stretch reads YKSTVGVDF. T71 carries the post-translational modification Phosphothreonine; by LRRK2. At S72 the chain carries Phosphoserine. Positions 126, 156, and 157 each coordinate GTP. 2 S-geranylgeranyl cysteine lipidation sites follow: C203 and C204.

It belongs to the small GTPase superfamily. Rab family. In terms of assembly, interacts with LRRK2 (via the N-terminus); this interaction is direct and stimulates kinase activity. As to expression, expressed predominantly in kidney and much less in brain, heart, muscle, fat, liver, spleen, adrenal gland, ovary, thymus and lung. Not expressed in testis and intestine.

The protein resides in the cell membrane. Its subcellular location is the cytoplasm. It is found in the perinuclear region. It localises to the golgi apparatus. The protein localises to the golgi apparatus membrane. The protein resides in the trans-Golgi network. Its subcellular location is the cytoskeleton. In terms of biological role, the small GTPases Rab are key regulators in vesicle trafficking. Essential for maintaining the integrity of endosome-trans-Golgi network structure. Together with LRRK2, plays a role in the retrograde trafficking pathway for recycling proteins, such as mannose 6 phosphate receptor (M6PR), between lysosomes and the Golgi apparatus in a retromer-dependent manner. Recruits LRRK2 to the Golgi apparatus and stimulates LRRK2 kinase activity. Stimulates phosphorylation of RAB10 'Thr-73' by LRRK2. Regulates also neuronal process morphology in the intact central nervous system (CNS). This chain is Ras-related protein Rab-7L1 (Rab29), found in Rattus norvegicus (Rat).